Here is a 619-residue protein sequence, read N- to C-terminus: Alpha-L-arabinofuranosidase C (619 aa).

Residues 1 to 37 form the signal peptide; it reads MINHNKTPNILAKVFKRTCGLVSTGAALAILSQAASA. The CBM2 domain occupies 38–136; sequence ACTYTIDSEW…TVTGAACNSA (99 aa). Cys-39 and Cys-133 are disulfide-bonded. Residues 163–289 enclose the CBM6 domain; the sequence is LLQEAQAGFC…LPNIDSLSVV (127 aa). A disordered region spans residues 300-319; it reads SVSSSSSVQSSSSSSSTPSQ.

This sequence belongs to the glycosyl hydrolase 62 family.

The protein localises to the secreted. It catalyses the reaction Hydrolysis of terminal non-reducing alpha-L-arabinofuranoside residues in alpha-L-arabinosides.. It functions in the pathway glycan metabolism; hemicellulose degradation. Its function is as follows. Xylanase C contributes to hydrolyze hemicellulose, the major component of plant cell-walls. In Cellvibrio japonicus (strain Ueda107) (Pseudomonas fluorescens subsp. cellulosa), this protein is Alpha-L-arabinofuranosidase C (xynC).